The sequence spans 354 residues: MSLRGSLSRLLQTRVHSILKKSVHSVAVIGAPFSQGQKRKGVEHGPAAIREAGLMKRLSSLGCHLKDFGDLSFTPVPKDDLYNNLIVNPRSVGLANQELAEVVSRAVSDGYSCVTLGGDHSLAIGTISGHARHCPDLCVVWVDAHADINTPLTTSSGNLHGQPVSFLLRELQDKVPQLPGFSWIKPCISSASIVYIGLRDVDPPEHFILKNYDIQYFSMRDIDRLGIQKVMERTFDLLIGKRQRPIHLSFDIDAFDPTLAPATGTPVVGGLTYREGMYIAEEIHNTGLLSALDLVEVNPQLATSEEEAKTTANLAVDVIASSFGQTREGGHIVYDQLPTPSSPDESENQARVRI.

A mitochondrion-targeting transit peptide spans 1-22 (MSLRGSLSRLLQTRVHSILKKS). The Mn(2+) site is built by histidine 120, aspartate 143, histidine 145, and aspartate 147. Substrate contacts are provided by residues 145 to 149 (HADIN), 156 to 158 (SGN), and aspartate 202. Aspartate 251 and aspartate 253 together coordinate Mn(2+). Substrate contacts are provided by threonine 265 and glutamate 296. Residues 334-354 (YDQLPTPSSPDESENQARVRI) form a disordered region.

It belongs to the arginase family. In terms of assembly, homotrimer. Requires Mn(2+) as cofactor. In terms of tissue distribution, expressed most strongly in kidney and prostate, much less strongly in the brain, skeletal muscle, placenta, lung, mammary gland, macrophage, uterus, testis and gut, but apparently not in the liver, heart and pancreas. Expressed in activated T cells.

It is found in the mitochondrion. It catalyses the reaction L-arginine + H2O = urea + L-ornithine. It participates in nitrogen metabolism; urea cycle; L-ornithine and urea from L-arginine: step 1/1. May play a role in the regulation of extra-urea cycle arginine metabolism and also in down-regulation of nitric oxide synthesis. Extrahepatic arginase functions to regulate L-arginine bioavailability to nitric oxid synthase (NOS). Arginine metabolism is a critical regulator of innate and adaptive immune responses. Seems to be involved in negative regulation of the survival capacity of activated CD4(+) and CD8(+) T cells. May suppress inflammation-related signaling in asthmatic airway epithelium. May contribute to the immune evasion of H.pylori by restricting M1 macrophage activation and polyamine metabolism. In fetal dendritic cells may play a role in promoting immune suppression and T cell TNF-alpha production during gestation. Regulates RPS6KB1 signaling, which promotes endothelial cell senescence and inflammation and implicates NOS3/eNOS dysfunction. Can inhibit endothelial autophagy independently of its enzymatic activity implicating mTORC2 signaling. Involved in vascular smooth muscle cell senescence and apoptosis independently of its enzymatic activity. Since NOS is found in the penile corpus cavernosum smooth muscle, the clitoral corpus cavernosum and the vagina, arginase-2 plays a role in both male and female sexual arousal. The polypeptide is Arginase-2, mitochondrial (ARG2) (Homo sapiens (Human)).